A 134-amino-acid chain; its full sequence is Small ribosomal subunit protein bS6 (134 aa).

The tract at residues 97–134 (TDVSPIKASEGREDRRSAPQREERNHDNSDEVSEESED) is disordered. Residues 105–125 (SEGREDRRSAPQREERNHDNS) show a composition bias toward basic and acidic residues.

Belongs to the bacterial ribosomal protein bS6 family.

Binds together with bS18 to 16S ribosomal RNA. The chain is Small ribosomal subunit protein bS6 from Marinomonas sp. (strain MWYL1).